A 189-amino-acid polypeptide reads, in one-letter code: Pyridoxal 5'-phosphate synthase subunit PdxT (189 aa).

50-52 (GES) is an L-glutamine binding site. Cys80 serves as the catalytic Nucleophile. L-glutamine is bound by residues Arg107 and 134 to 135 (IR). Residues His169 and Glu171 each act as charge relay system in the active site.

It belongs to the glutaminase PdxT/SNO family. As to quaternary structure, in the presence of PdxS, forms a dodecamer of heterodimers. Only shows activity in the heterodimer.

The enzyme catalyses aldehydo-D-ribose 5-phosphate + D-glyceraldehyde 3-phosphate + L-glutamine = pyridoxal 5'-phosphate + L-glutamate + phosphate + 3 H2O + H(+). The catalysed reaction is L-glutamine + H2O = L-glutamate + NH4(+). It functions in the pathway cofactor biosynthesis; pyridoxal 5'-phosphate biosynthesis. Catalyzes the hydrolysis of glutamine to glutamate and ammonia as part of the biosynthesis of pyridoxal 5'-phosphate. The resulting ammonia molecule is channeled to the active site of PdxS. The sequence is that of Pyridoxal 5'-phosphate synthase subunit PdxT from Picrophilus torridus (strain ATCC 700027 / DSM 9790 / JCM 10055 / NBRC 100828 / KAW 2/3).